The sequence spans 277 residues: Ribosomal RNA small subunit methyltransferase A (277 aa).

S-adenosyl-L-methionine is bound by residues Asn18, Leu20, Gly45, Glu66, Asp89, and Asn110.

It belongs to the class I-like SAM-binding methyltransferase superfamily. rRNA adenine N(6)-methyltransferase family. RsmA subfamily.

The protein localises to the cytoplasm. The catalysed reaction is adenosine(1518)/adenosine(1519) in 16S rRNA + 4 S-adenosyl-L-methionine = N(6)-dimethyladenosine(1518)/N(6)-dimethyladenosine(1519) in 16S rRNA + 4 S-adenosyl-L-homocysteine + 4 H(+). In terms of biological role, specifically dimethylates two adjacent adenosines (A1518 and A1519) in the loop of a conserved hairpin near the 3'-end of 16S rRNA in the 30S particle. May play a critical role in biogenesis of 30S subunits. This is Ribosomal RNA small subunit methyltransferase A from Cupriavidus taiwanensis (strain DSM 17343 / BCRC 17206 / CCUG 44338 / CIP 107171 / LMG 19424 / R1) (Ralstonia taiwanensis (strain LMG 19424)).